We begin with the raw amino-acid sequence, 76 residues long: U-scoloptoxin(13)-Sa1a (76 aa).

A signal peptide spans 1 to 22 (MAYIFALIFAFVVCINTDVIQA).

It belongs to the scoloptoxin-13 family. In terms of processing, contains 4 disulfide bonds. Expressed by the venom gland.

It is found in the secreted. The sequence is that of U-scoloptoxin(13)-Sa1a from Scolopendra alternans (Florida Keys giant centipede).